Reading from the N-terminus, the 540-residue chain is Phenylalanine--tRNA ligase beta subunit (540 aa).

In terms of domain architecture, B5 spans 266 to 342 (LRPEKRTVSV…IAYGYDKIET (77 aa)). Residues aspartate 320, aspartate 326, glutamate 329, and aspartate 330 each contribute to the Mg(2+) site.

Belongs to the phenylalanyl-tRNA synthetase beta subunit family. Type 2 subfamily. Tetramer of two alpha and two beta subunits. Mg(2+) serves as cofactor.

Its subcellular location is the cytoplasm. The catalysed reaction is tRNA(Phe) + L-phenylalanine + ATP = L-phenylalanyl-tRNA(Phe) + AMP + diphosphate + H(+). This Methanocorpusculum labreanum (strain ATCC 43576 / DSM 4855 / Z) protein is Phenylalanine--tRNA ligase beta subunit.